Here is a 312-residue protein sequence, read N- to C-terminus: Probable phytanoyl-CoA dioxygenase (312 aa).

Residues Lys-84, Met-124, 142–144 (HQD), and Trp-160 each bind 2-oxoglutarate. Residues His-142 and Asp-144 each coordinate Fe cation. His-231 contributes to the Fe cation binding site. Ser-233 and Arg-242 together coordinate 2-oxoglutarate.

The protein belongs to the PhyH family. Requires Fe cation as cofactor. L-ascorbate is required as a cofactor.

The catalysed reaction is phytanoyl-CoA + 2-oxoglutarate + O2 = 2-hydroxyphytanoyl-CoA + succinate + CO2. The protein operates within lipid metabolism; fatty acid metabolism. Its function is as follows. Converts phytanoyl-CoA to 2-hydroxyphytanoyl-CoA. This chain is Probable phytanoyl-CoA dioxygenase, found in Caenorhabditis elegans.